Reading from the N-terminus, the 469-residue chain is Peripherin (469 aa).

Composition is skewed to low complexity over residues 1–18 (MSHP…SYRR) and 27–53 (SPGA…PGSS). The segment at 1-60 (MSHPSGLRSSVSSTSYRRTFGPPPSLSPGAFSYSSSSRFSSSRLLGSASPGSSVRLGSFR) is disordered. The tract at residues 1–98 (MSHPSGLRSS…FLATRSNEKQ (98 aa)) is head. Y16 is modified (3'-nitrotyrosine). 3 positions are modified to phosphoserine: S27, S49, and S58. An IF rod domain is found at 96 to 406 (EKQELQELND…KLLEGEESRI (311 aa)). Positions 99–131 (ELQELNDRFANFIEKVRFLEQQNAALRGELNQA) are coil 1A. The segment at 132–142 (RGQEPARADQL) is linker 1. Positions 143-238 (CQQELRELRR…KLHEEELRDL (96 aa)) are coil 1B. Residues 239-261 (QLSVESQQVQHVEVEATVKPELT) are linker 2. The segment at 262-404 (AALRDIRAQY…YRKLLEGEES (143 aa)) is coil 2. Y378 is modified (3'-nitrotyrosine). Residues 405–469 (RISVPVHSFA…SELDKSPQSY (65 aa)) form a tail region. A disordered region spans residues 447–469 (GEQVVTESQKEQHSELDKSPQSY). Y469 is subject to Phosphotyrosine.

Belongs to the intermediate filament family. In terms of assembly, forms homodimers (in vitro). Homopolymerizes into a filamentous network (in vitro). Forms heterodimers with NEFL, NEFM or NEFH (in vitro). Interacts with DST (via C-terminus). Interacts with RAB7A; the interaction is direct. Interacts with PRKCE (via phorbol-ester/DAG-type 2 domain). In terms of processing, phosphorylated; phosphorylation increases after nerve injury in regenerating neurons.

Its subcellular location is the cytoplasm. The protein localises to the cytoskeleton. It localises to the cell projection. It is found in the axon. The protein resides in the perikaryon. Its function is as follows. Class-III neuronal intermediate filament protein. May form an independent structural network without the involvement of other neurofilaments or may cooperate with the neuronal intermediate filament proteins NEFL, NEFH, NEFM and INA to form a filamentous network. Assembly of the neuronal intermediate filaments may be regulated by RAB7A. Plays a role in the development of unmyelinated sensory neurons. May be involved in axon elongation and axon regeneration after injury. Inhibits neurite extension in type II spiral ganglion neurons in the cochlea. The sequence is that of Peripherin (PRPH) from Bos taurus (Bovine).